The chain runs to 185 residues: Putative lipoprotein LprB (185 aa).

The first 24 residues, Met-1 to Gly-24, serve as a signal peptide directing secretion. Cys-25 is lipidated: N-palmitoyl cysteine. Cys-25 is lipidated: S-diacylglycerol cysteine. A disordered region spans residues Ser-26 to Pro-50.

Its subcellular location is the cell membrane. This chain is Putative lipoprotein LprB (lprB), found in Mycobacterium bovis (strain ATCC BAA-935 / AF2122/97).